The sequence spans 259 residues: UPF0246 protein Pmen_1032 (259 aa).

It belongs to the UPF0246 family.

The polypeptide is UPF0246 protein Pmen_1032 (Ectopseudomonas mendocina (strain ymp) (Pseudomonas mendocina)).